A 281-amino-acid chain; its full sequence is Bifunctional protein FolD (281 aa).

Residues 164-166, Ser-189, and Ile-230 each bind NADP(+); that span reads GRS.

This sequence belongs to the tetrahydrofolate dehydrogenase/cyclohydrolase family. As to quaternary structure, homodimer.

It catalyses the reaction (6R)-5,10-methylene-5,6,7,8-tetrahydrofolate + NADP(+) = (6R)-5,10-methenyltetrahydrofolate + NADPH. The enzyme catalyses (6R)-5,10-methenyltetrahydrofolate + H2O = (6R)-10-formyltetrahydrofolate + H(+). It participates in one-carbon metabolism; tetrahydrofolate interconversion. In terms of biological role, catalyzes the oxidation of 5,10-methylenetetrahydrofolate to 5,10-methenyltetrahydrofolate and then the hydrolysis of 5,10-methenyltetrahydrofolate to 10-formyltetrahydrofolate. The sequence is that of Bifunctional protein FolD from Pelagibacter ubique (strain HTCC1062).